Consider the following 487-residue polypeptide: Cysteine--tRNA ligase (487 aa).

Position 29 (Cys29) interacts with Zn(2+). The 'HIGH' region signature appears at 31-41; it reads VTVYDYNHVGH. Zn(2+) contacts are provided by Cys209, His234, and Glu238. Residues 266–270 carry the 'KMSKS' region motif; it reads KMSKS. Lys269 contributes to the ATP binding site.

The protein belongs to the class-I aminoacyl-tRNA synthetase family. As to quaternary structure, monomer. It depends on Zn(2+) as a cofactor.

Its subcellular location is the cytoplasm. It catalyses the reaction tRNA(Cys) + L-cysteine + ATP = L-cysteinyl-tRNA(Cys) + AMP + diphosphate. The chain is Cysteine--tRNA ligase from Sulfurihydrogenibium sp. (strain YO3AOP1).